The chain runs to 434 residues: Homogentisate 1,2-dioxygenase (434 aa).

Catalysis depends on His-289, which acts as the Proton acceptor. Fe cation-binding residues include His-332 and Glu-338. Residues Tyr-347 and His-368 each coordinate homogentisate. His-368 serves as a coordination point for Fe cation.

Belongs to the homogentisate dioxygenase family. As to quaternary structure, hexamer; dimer of trimers. It depends on Fe cation as a cofactor.

It carries out the reaction homogentisate + O2 = 4-maleylacetoacetate + H(+). Its pathway is amino-acid degradation; L-phenylalanine degradation; acetoacetate and fumarate from L-phenylalanine: step 4/6. In terms of biological role, involved in the catabolism of homogentisate (2,5-dihydroxyphenylacetate or 2,5-OH-PhAc), a central intermediate in the degradation of phenylalanine and tyrosine. Catalyzes the oxidative ring cleavage of the aromatic ring of homogentisate to yield maleylacetoacetate. This Pseudomonas fluorescens (strain ATCC BAA-477 / NRRL B-23932 / Pf-5) protein is Homogentisate 1,2-dioxygenase.